Consider the following 494-residue polypeptide: Alpha-amylase (494 aa).

An N-terminal signal peptide occupies residues 1 to 26 (MQISKAALLASLAALVYAQPVTLFKR). An intrachain disulfide couples Cys-57 to Cys-65. Residue Trp-110 participates in substrate binding. Asn-148 provides a ligand contact to Ca(2+). His-149 serves as a coordination point for substrate. Cysteines 177 and 191 form a disulfide. Asp-202 is a Ca(2+) binding site. Asn-224 carries an N-linked (GlcNAc...) asparagine glycan. Substrate is bound at residue Arg-231. Ca(2+) is bound by residues Asp-233, His-237, and Glu-257. Asp-233 (nucleophile) is an active-site residue. Residue 236-237 (KH) participates in substrate binding. Glu-257 acts as the Proton donor in catalysis. Gly-261 serves as a coordination point for substrate. A disulfide bridge connects residues Cys-267 and Cys-310. Substrate-binding residues include Asp-324 and Arg-371. An intrachain disulfide couples Cys-462 to Cys-493.

It belongs to the glycosyl hydrolase 13 family. Requires Ca(2+) as cofactor.

The protein localises to the secreted. The enzyme catalyses Endohydrolysis of (1-&gt;4)-alpha-D-glucosidic linkages in polysaccharides containing three or more (1-&gt;4)-alpha-linked D-glucose units.. This Saccharomycopsis fibuligera (Yeast) protein is Alpha-amylase (ALP1).